The primary structure comprises 131 residues: Transcription antitermination protein NusB (131 aa).

Belongs to the NusB family.

Involved in transcription antitermination. Required for transcription of ribosomal RNA (rRNA) genes. Binds specifically to the boxA antiterminator sequence of the ribosomal RNA (rrn) operons. The polypeptide is Transcription antitermination protein NusB (Aliarcobacter butzleri (strain RM4018) (Arcobacter butzleri)).